Consider the following 164-residue polypeptide: MEMTHAQRLILSNQYKMMTLLDPENGERYRRLQTIIERGYGLQMRELDRDFGELSEETCRTVIDIMEMYHALQVSRSNMKEGQSIDERRVTFLGFDAATEARFLGYVRFLVNTEGRYTHFDAGTHGFNAQTPMWEKYQRMLKVWQACPRQYHLCANEIMQIINA.

This sequence belongs to the UPF0304 family.

The protein is UPF0304 protein ESA_00925 of Cronobacter sakazakii (strain ATCC BAA-894) (Enterobacter sakazakii).